A 358-amino-acid polypeptide reads, in one-letter code: Magnesium-protoporphyrin IX monomethyl ester [oxidative] cyclase 3 (358 aa).

It belongs to the AcsF family. The cofactor is Fe cation.

It catalyses the reaction Mg-protoporphyrin IX 13-monomethyl ester + 3 NADPH + 3 O2 + 2 H(+) = 3,8-divinyl protochlorophyllide a + 3 NADP(+) + 5 H2O. The protein operates within porphyrin-containing compound metabolism; chlorophyll biosynthesis (light-independent). Its function is as follows. Catalyzes the formation of the isocyclic ring in chlorophyll biosynthesis. Mediates the cyclase reaction, which results in the formation of divinylprotochlorophyllide (Pchlide) characteristic of all chlorophylls from magnesium-protoporphyrin IX 13-monomethyl ester (MgPMME). This chain is Magnesium-protoporphyrin IX monomethyl ester [oxidative] cyclase 3, found in Nostoc sp. (strain PCC 7120 / SAG 25.82 / UTEX 2576).